The primary structure comprises 273 residues: Undecaprenyl-diphosphatase (273 aa).

The next 6 helical transmembrane spans lie at 46 to 63 (LFEV…CWEY), 83 to 103 (FVLN…LAGK), 109 to 129 (LFNS…ILWV), 184 to 204 (ATEF…AYDL), 218 to 238 (AFGI…RGLL), and 249 to 269 (FAWY…YGLV).

This sequence belongs to the UppP family.

Its subcellular location is the cell inner membrane. It carries out the reaction di-trans,octa-cis-undecaprenyl diphosphate + H2O = di-trans,octa-cis-undecaprenyl phosphate + phosphate + H(+). Functionally, catalyzes the dephosphorylation of undecaprenyl diphosphate (UPP). Confers resistance to bacitracin. This chain is Undecaprenyl-diphosphatase, found in Methylococcus capsulatus (strain ATCC 33009 / NCIMB 11132 / Bath).